The primary structure comprises 299 residues: Regucalcin (299 aa).

Glutamate 18 provides a ligand contact to a divalent metal cation. Residues arginine 101, asparagine 103, and glutamate 121 each coordinate substrate. A divalent metal cation contacts are provided by asparagine 154 and aspartate 204. Aspartate 204 (proton donor/acceptor) is an active-site residue. An N6-succinyllysine mark is found at lysine 244 and lysine 253.

Belongs to the SMP-30/CGR1 family. Monomer. Requires Zn(2+) as cofactor. Mn(2+) serves as cofactor. The cofactor is Ca(2+). It depends on Mg(2+) as a cofactor.

Its subcellular location is the cytoplasm. The enzyme catalyses D-glucono-1,5-lactone + H2O = D-gluconate + H(+). Its pathway is cofactor biosynthesis; L-ascorbate biosynthesis via UDP-alpha-D-glucuronate pathway; L-ascorbate from UDP-alpha-D-glucuronate: step 3/4. Its function is as follows. Gluconolactonase with low activity towards other sugar lactones, including gulonolactone and galactonolactone. Catalyzes a key step in ascorbic acid (vitamin C) biosynthesis. Can also hydrolyze diisopropyl phosphorofluoridate and phenylacetate (in vitro). Calcium-binding protein. Modulates Ca(2+) signaling, and Ca(2+)-dependent cellular processes and enzyme activities. The protein is Regucalcin (RGN) of Bos taurus (Bovine).